A 131-amino-acid chain; its full sequence is Keratin, high-sulfur matrix protein, IIIA3 (131 aa).

Wool.

Functionally, the keratin products of mammalian epidermal derivatives such as wool and hair consist of microfibrils embedded in a rigid matrix of other proteins. The matrix proteins include the high-sulfur and high-tyrosine keratins, having molecular weights of 6-20 kDa, whereas the microfibrils contain the larger, low-sulfur keratins (40-56 kDa). The sequence is that of Keratin, high-sulfur matrix protein, IIIA3 from Ovis aries (Sheep).